Consider the following 132-residue polypeptide: Homeobox protein ceh-1 (132 aa).

Positions 1–60 (MRRARTAFTYEQLVALENKFKTSRYLSVVERLNLAIQLQLSETQVKIWFQNRRTKWKKHN) form a DNA-binding region, homeobox. The segment at 56 to 80 (WKKHNPGQDANTPQTPPSSDETQIQ) is disordered. Polar residues predominate over residues 63–80 (QDANTPQTPPSSDETQIQ).

The protein localises to the nucleus. The sequence is that of Homeobox protein ceh-1 (ceh-1) from Caenorhabditis elegans.